The sequence spans 469 residues: 3-isopropylmalate dehydratase large subunit (469 aa).

Residues C347, C408, and C411 each contribute to the [4Fe-4S] cluster site.

The protein belongs to the aconitase/IPM isomerase family. LeuC type 1 subfamily. As to quaternary structure, heterodimer of LeuC and LeuD. It depends on [4Fe-4S] cluster as a cofactor.

It carries out the reaction (2R,3S)-3-isopropylmalate = (2S)-2-isopropylmalate. Its pathway is amino-acid biosynthesis; L-leucine biosynthesis; L-leucine from 3-methyl-2-oxobutanoate: step 2/4. Its function is as follows. Catalyzes the isomerization between 2-isopropylmalate and 3-isopropylmalate, via the formation of 2-isopropylmaleate. The sequence is that of 3-isopropylmalate dehydratase large subunit from Actinobacillus pleuropneumoniae serotype 5b (strain L20).